Consider the following 66-residue polypeptide: Myrmicitoxin(1)-Pr5a (66 aa).

The first 25 residues, 1 to 25, serve as a signal peptide directing secretion; that stretch reads MRSLYLSFSLTIIFVLVIMHAEAKA. Residues 26-37 constitute a propeptide that is removed on maturation; that stretch reads ISEPNAIAEADP. Val-65 is subject to Valine amide.

This sequence belongs to the formicidae venom clade 3 family. In terms of tissue distribution, expressed by the venom gland.

Its subcellular location is the secreted. Functionally, toxin that causes a rapid and irreversible paralysis when intrathoracically injected into insects (blowflies). Does not cause spontaneous nocifensive behaviors by intraplantar injection in mice. Exhibits hemolytic and cytotoxic activities on HEK293 cells. The protein is Myrmicitoxin(1)-Pr5a of Pogonomyrmex rugosus (Desert harvester ant).